The primary structure comprises 161 residues: Allophycocyanin alpha chain (161 aa).

Asn-71 carries the N4-methylasparagine modification. Cys-81 contributes to the (2R,3E)-phycocyanobilin binding site.

This sequence belongs to the phycobiliprotein family. In terms of assembly, heterodimer of an alpha and a beta chain. In terms of processing, contains one covalently linked phycocyanobilin chromophore.

The protein resides in the plastid. It is found in the chloroplast thylakoid membrane. Its function is as follows. Light-harvesting photosynthetic bile pigment-protein from the phycobiliprotein complex. Allophycocyanin has a maximum absorption at approximately 650 nanometers. The chain is Allophycocyanin alpha chain (apcA) from Pyropia haitanensis (Red seaweed).